Here is a 437-residue protein sequence, read N- to C-terminus: Adenylosuccinate synthetase, organellar chromatophore (437 aa).

Residues 12–18 (GDEGKGK) and 40–42 (GHT) contribute to the GTP site. Asp-13 functions as the Proton acceptor in the catalytic mechanism. Mg(2+) contacts are provided by Asp-13 and Gly-40. Residues 13 to 16 (DEGK), 38 to 41 (NAGH), Thr-128, Arg-142, Gln-223, Thr-238, and Arg-302 contribute to the IMP site. His-41 acts as the Proton donor in catalysis. Position 298–304 (298–304 (TTTGRRR)) interacts with substrate. GTP contacts are provided by residues Arg-304 and 330–332 (KLD).

Belongs to the adenylosuccinate synthetase family. As to quaternary structure, homodimer. Requires Mg(2+) as cofactor.

It localises to the plastid. The protein resides in the organellar chromatophore. The enzyme catalyses IMP + L-aspartate + GTP = N(6)-(1,2-dicarboxyethyl)-AMP + GDP + phosphate + 2 H(+). It functions in the pathway purine metabolism; AMP biosynthesis via de novo pathway; AMP from IMP: step 1/2. Functionally, plays an important role in the de novo pathway and in the salvage pathway of purine nucleotide biosynthesis. Catalyzes the first committed step in the biosynthesis of AMP from IMP. The sequence is that of Adenylosuccinate synthetase, organellar chromatophore from Paulinella chromatophora.